A 388-amino-acid polypeptide reads, in one-letter code: MGKKAVHFGGGNIGRGFVGEFLHESDYEVVFVDVMDSIIDALQGASSYKVTEVSNEGEHTKTVTNYRAINSKHNLDQVISEISTADVVTCAVGPNILKFIAPPIAKGIDARTIERPLAVVACENAIGATDTLHKFVKENTDPSRVESLSSRARFANSAIDRIVPTQDPDSGLDVKIEKFYEWVVEKTPFGEWGHPDIQAILWVDNLDPYIERKLYTVNTGHATAAYYGYNMGKKTIYESMSDEKIRGHVRDALSETSTLIVDKYGIPAQEQRKYVDAIVARISNPHLEDVVERVGRAPLRKLGRKERFVGPASQLAERGKKVDALLGAMEQALRFQNVLEDDESFELAKILKTESAEDATAKLTGLESDHPLFARVVERVAKVQKGPK.

5 to 16 (AVHFGGGNIGRG) contributes to the NAD(+) binding site. Residue K213 is part of the active site.

This sequence belongs to the mannitol dehydrogenase family. As to quaternary structure, monomer.

It catalyses the reaction D-mannitol 1-phosphate + NAD(+) = beta-D-fructose 6-phosphate + NADH + H(+). Functionally, catalyzes the NAD(H)-dependent interconversion of D-fructose 6-phosphate and D-mannitol 1-phosphate in the mannitol metabolic pathway. This Coccidioides immitis (strain RS) (Valley fever fungus) protein is Mannitol-1-phosphate 5-dehydrogenase.